Consider the following 112-residue polypeptide: uncharacterized protein (112 aa).

The chain crosses the membrane as a helical span at residues 82–104 (IFFGFSIIASYFLKFHLLYVILL).

Its subcellular location is the membrane. This is an uncharacterized protein from Pasteurella multocida (strain Pm70).